A 475-amino-acid polypeptide reads, in one-letter code: Ribulose bisphosphate carboxylase large chain (475 aa).

Residues 1 to 2 (MS) constitute a propeptide that is removed on maturation. Proline 3 carries the N-acetylproline modification. Lysine 14 is subject to N6,N6,N6-trimethyllysine. Substrate-binding residues include asparagine 123 and threonine 173. Lysine 175 acts as the Proton acceptor in catalysis. Lysine 177 contacts substrate. Mg(2+) is bound by residues lysine 201, aspartate 203, and glutamate 204. An N6-carboxylysine modification is found at lysine 201. Histidine 294 (proton acceptor) is an active-site residue. Substrate is bound by residues arginine 295, histidine 327, and serine 379.

This sequence belongs to the RuBisCO large chain family. Type I subfamily. Heterohexadecamer of 8 large chains and 8 small chains; disulfide-linked. The disulfide link is formed within the large subunit homodimers. Mg(2+) is required as a cofactor. The disulfide bond which can form in the large chain dimeric partners within the hexadecamer appears to be associated with oxidative stress and protein turnover.

Its subcellular location is the plastid. It localises to the chloroplast. It carries out the reaction 2 (2R)-3-phosphoglycerate + 2 H(+) = D-ribulose 1,5-bisphosphate + CO2 + H2O. It catalyses the reaction D-ribulose 1,5-bisphosphate + O2 = 2-phosphoglycolate + (2R)-3-phosphoglycerate + 2 H(+). In terms of biological role, ruBisCO catalyzes two reactions: the carboxylation of D-ribulose 1,5-bisphosphate, the primary event in carbon dioxide fixation, as well as the oxidative fragmentation of the pentose substrate in the photorespiration process. Both reactions occur simultaneously and in competition at the same active site. The chain is Ribulose bisphosphate carboxylase large chain from Amborella trichopoda.